The sequence spans 249 residues: 3-deoxy-manno-octulosonate cytidylyltransferase (249 aa).

This sequence belongs to the KdsB family.

The protein localises to the cytoplasm. It catalyses the reaction 3-deoxy-alpha-D-manno-oct-2-ulosonate + CTP = CMP-3-deoxy-beta-D-manno-octulosonate + diphosphate. It functions in the pathway nucleotide-sugar biosynthesis; CMP-3-deoxy-D-manno-octulosonate biosynthesis; CMP-3-deoxy-D-manno-octulosonate from 3-deoxy-D-manno-octulosonate and CTP: step 1/1. It participates in bacterial outer membrane biogenesis; lipopolysaccharide biosynthesis. In terms of biological role, activates KDO (a required 8-carbon sugar) for incorporation into bacterial lipopolysaccharide in Gram-negative bacteria. The polypeptide is 3-deoxy-manno-octulosonate cytidylyltransferase (Brucella anthropi (strain ATCC 49188 / DSM 6882 / CCUG 24695 / JCM 21032 / LMG 3331 / NBRC 15819 / NCTC 12168 / Alc 37) (Ochrobactrum anthropi)).